The primary structure comprises 459 residues: U-box domain-containing protein 75 (459 aa).

Residues 64 to 138 (AVPAVFICPI…AAWFSRRYTR (75 aa)) form the U-box domain. 2 ARM repeats span residues 188-229 (QSVT…GVPL) and 231-270 (ADAK…ILME).

In terms of assembly, interacts with GPA1. Expressed highly in panicles at flowering time, at moderate levels in vegetative shoot apices, leaf sheaths, leaf blades, and elongating internodes, and at low levels in roots.

Its subcellular location is the cell membrane. The enzyme catalyses S-ubiquitinyl-[E2 ubiquitin-conjugating enzyme]-L-cysteine + [acceptor protein]-L-lysine = [E2 ubiquitin-conjugating enzyme]-L-cysteine + N(6)-ubiquitinyl-[acceptor protein]-L-lysine.. It participates in protein modification; protein ubiquitination. Its function is as follows. E3 ubiquitin ligase that may function as positive regulator of brassinosteroid (BR) signaling. Possesses E3 ubiquitin ligase in vitro. Acts together with the heterotrimeric G alpha subunit GPA1 at the plasma membrane to mediate a BR signaling pathway that affects plant growth and development. Does not seem to be involved in gibberellin or cytokinin responses. In Oryza sativa subsp. japonica (Rice), this protein is U-box domain-containing protein 75.